We begin with the raw amino-acid sequence, 165 residues long: Large ribosomal subunit protein uL10 (165 aa).

The protein belongs to the universal ribosomal protein uL10 family. As to quaternary structure, part of the ribosomal stalk of the 50S ribosomal subunit. The N-terminus interacts with L11 and the large rRNA to form the base of the stalk. The C-terminus forms an elongated spine to which L12 dimers bind in a sequential fashion forming a multimeric L10(L12)X complex.

Functionally, forms part of the ribosomal stalk, playing a central role in the interaction of the ribosome with GTP-bound translation factors. This chain is Large ribosomal subunit protein uL10, found in Mycoplasmopsis synoviae (strain 53) (Mycoplasma synoviae).